A 131-amino-acid polypeptide reads, in one-letter code: Small ribosomal subunit protein eS6 (131 aa).

It belongs to the eukaryotic ribosomal protein eS6 family.

This is Small ribosomal subunit protein eS6 from Halobacterium salinarum (strain ATCC 29341 / DSM 671 / R1).